Reading from the N-terminus, the 89-residue chain is Small ribosomal subunit protein uS15 (89 aa).

A compositionally biased stretch (basic and acidic residues) spans 1-10 (MPLNTEKKQE). The disordered stretch occupies residues 1–22 (MPLNTEKKQELINSHQTHATDT). Positions 11–22 (LINSHQTHATDT) are enriched in polar residues.

The protein belongs to the universal ribosomal protein uS15 family. Part of the 30S ribosomal subunit. Forms a bridge to the 50S subunit in the 70S ribosome, contacting the 23S rRNA.

One of the primary rRNA binding proteins, it binds directly to 16S rRNA where it helps nucleate assembly of the platform of the 30S subunit by binding and bridging several RNA helices of the 16S rRNA. Functionally, forms an intersubunit bridge (bridge B4) with the 23S rRNA of the 50S subunit in the ribosome. This is Small ribosomal subunit protein uS15 from Synechococcus sp. (strain RCC307).